We begin with the raw amino-acid sequence, 326 residues long: tRNA-modifying protein YgfZ (326 aa).

Positions 27 and 189 each coordinate folate.

It belongs to the tRNA-modifying YgfZ family.

The protein localises to the cytoplasm. Its function is as follows. Folate-binding protein involved in regulating the level of ATP-DnaA and in the modification of some tRNAs. It is probably a key factor in regulatory networks that act via tRNA modification, such as initiation of chromosomal replication. In Salmonella paratyphi C (strain RKS4594), this protein is tRNA-modifying protein YgfZ.